We begin with the raw amino-acid sequence, 66 residues long: Large ribosomal subunit protein bL35 (66 aa).

2 stretches are compositionally biased toward basic residues: residues 1–16 and 23–45; these read MPKFKTHRASAKRFKR and KRSHAYTSHRFHGKTKKQRRQLR. The tract at residues 1–66 is disordered; it reads MPKFKTHRAS…RIRQMLSGLK (66 aa).

The protein belongs to the bacterial ribosomal protein bL35 family.

The polypeptide is Large ribosomal subunit protein bL35 (Latilactobacillus sakei subsp. sakei (strain 23K) (Lactobacillus sakei subsp. sakei)).